Consider the following 486-residue polypeptide: Glutamyl-tRNA(Gln) amidotransferase subunit A (486 aa).

Active-site charge relay system residues include Lys76 and Ser151. The active-site Acyl-ester intermediate is Ser175.

Belongs to the amidase family. GatA subfamily. As to quaternary structure, heterotrimer of A, B and C subunits.

It catalyses the reaction L-glutamyl-tRNA(Gln) + L-glutamine + ATP + H2O = L-glutaminyl-tRNA(Gln) + L-glutamate + ADP + phosphate + H(+). Functionally, allows the formation of correctly charged Gln-tRNA(Gln) through the transamidation of misacylated Glu-tRNA(Gln) in organisms which lack glutaminyl-tRNA synthetase. The reaction takes place in the presence of glutamine and ATP through an activated gamma-phospho-Glu-tRNA(Gln). The polypeptide is Glutamyl-tRNA(Gln) amidotransferase subunit A (Chromohalobacter salexigens (strain ATCC BAA-138 / DSM 3043 / CIP 106854 / NCIMB 13768 / 1H11)).